The following is a 251-amino-acid chain: Hydroxyacylglutathione hydrolase (251 aa).

Zn(2+) contacts are provided by His-53, His-55, Asp-57, His-58, His-110, Asp-127, and His-165.

This sequence belongs to the metallo-beta-lactamase superfamily. Glyoxalase II family. Monomer. Requires Zn(2+) as cofactor.

The enzyme catalyses an S-(2-hydroxyacyl)glutathione + H2O = a 2-hydroxy carboxylate + glutathione + H(+). Its pathway is secondary metabolite metabolism; methylglyoxal degradation; (R)-lactate from methylglyoxal: step 2/2. Thiolesterase that catalyzes the hydrolysis of S-D-lactoyl-glutathione to form glutathione and D-lactic acid. This chain is Hydroxyacylglutathione hydrolase, found in Escherichia coli O45:K1 (strain S88 / ExPEC).